Here is a 339-residue protein sequence, read N- to C-terminus: UDP-N-acetylenolpyruvoylglucosamine reductase (339 aa).

The FAD-binding PCMH-type domain occupies 18–189 (GIDVKARYFS…LRVRFALTRT (172 aa)). The active site involves arginine 166. Serine 239 functions as the Proton donor in the catalytic mechanism. The active site involves glutamate 335.

It belongs to the MurB family. It depends on FAD as a cofactor.

It localises to the cytoplasm. It carries out the reaction UDP-N-acetyl-alpha-D-muramate + NADP(+) = UDP-N-acetyl-3-O-(1-carboxyvinyl)-alpha-D-glucosamine + NADPH + H(+). The protein operates within cell wall biogenesis; peptidoglycan biosynthesis. Functionally, cell wall formation. The protein is UDP-N-acetylenolpyruvoylglucosamine reductase of Pseudomonas putida (strain ATCC 47054 / DSM 6125 / CFBP 8728 / NCIMB 11950 / KT2440).